We begin with the raw amino-acid sequence, 508 residues long: Photosystem II CP47 reaction center protein (508 aa).

Transmembrane regions (helical) follow at residues 21–36, 101–115, 140–156, 203–218, 237–252, and 457–472; these read AVHIMHTALVAGWAGS, IVFSGLCFLAAIWHW, GIHLFLSGVACFGFGAF, IAAGTLGILAGLFHLS, VLSSSIAAVFFAAFVV, and SFALLFFFGHIWHGAR.

It belongs to the PsbB/PsbC family. PsbB subfamily. As to quaternary structure, PSII is composed of 1 copy each of membrane proteins PsbA, PsbB, PsbC, PsbD, PsbE, PsbF, PsbH, PsbI, PsbJ, PsbK, PsbL, PsbM, PsbT, PsbX, PsbY, PsbZ, Psb30/Ycf12, at least 3 peripheral proteins of the oxygen-evolving complex and a large number of cofactors. It forms dimeric complexes. It depends on Binds multiple chlorophylls. PSII binds additional chlorophylls, carotenoids and specific lipids. as a cofactor.

The protein resides in the plastid. It localises to the chloroplast thylakoid membrane. Its function is as follows. One of the components of the core complex of photosystem II (PSII). It binds chlorophyll and helps catalyze the primary light-induced photochemical processes of PSII. PSII is a light-driven water:plastoquinone oxidoreductase, using light energy to abstract electrons from H(2)O, generating O(2) and a proton gradient subsequently used for ATP formation. The sequence is that of Photosystem II CP47 reaction center protein from Buxus microphylla (Littleleaf boxwood).